Reading from the N-terminus, the 436-residue chain is MRRDVNGVTKSRFEMFSNSDEAVINKKLPKELLLRIFSFLDVVTLCRCAQVSRAWNVLALDGSNWQRIDLFDFQRDIEGRVVENISKRCGGFLRKLSLRGCLGVGDNALRTFAQNCRNIEVLNLNGCTKTTDATCTSLSKFCSKLRHLDLASCTSITNMSLKALSEGCPLLEQLNISWCDQVTKDGIQALVRGCGGLKALFLKGCTQLEDEALKYIGAHCPELVTLNLQTCLQITDEGLITICRGCHKLQSLCASGCSNITDAILNALGQNCPRLRILEVARCSQLTDVGFTTLARNCHELEKMDLEECVQITDSTLIQLSIHCPRLQVLSLSHCELITDDGIRHLGNGACAHDQLEVIELDNCPLITDASLEHLKSCHSLERIELYDCQQITRAGIKRLRTHLPNIKVHAYFAPVTPPPSVGGSRQRFCRCCIIL.

Positions 22–68 (AVINKKLPKELLLRIFSFLDVVTLCRCAQVSRAWNVLALDGSNWQRI) constitute an F-box domain. LRR repeat units lie at residues 74–100 (QRDI…SLRG), 101–126 (CLGV…NLNG), 127–152 (CTKT…DLAS), 153–178 (CTSI…NISW), 179–204 (CDQV…FLKG), 205–230 (CTQL…NLQT), 231–256 (CLQI…CASG), 257–282 (CSNI…EVAR), 283–308 (CSQL…DLEE), 309–334 (CVQI…SLSH), 335–363 (CELI…ELDN), 364–388 (CPLI…ELYD), and 389–414 (CQQI…AYFA). Thr417 carries the phosphothreonine modification. Ser421 carries the post-translational modification Phosphoserine.

Interacts with SKP1 and CUL1.

Its subcellular location is the cytoplasm. Its function is as follows. Substrate-recognition component of the SCF (SKP1-CUL1-F-box protein)-type E3 ubiquitin ligase complex. Role in neural transmission. This chain is F-box/LRR-repeat protein 20 (FBXL20), found in Bos taurus (Bovine).